We begin with the raw amino-acid sequence, 331 residues long: 3'-5' exonuclease (331 aa).

The tract at residues 27 to 92 (ERVKQTNAAK…EDGPASPEKE (66 aa)) is disordered. The span at 31 to 43 (QTNAAKKQIATNN) shows a compositional bias: polar residues. A compositionally biased stretch (basic and acidic residues) spans 47-67 (KNQDTPEMIKDKENAESENPP). Phosphoserine occurs at positions 80 and 88. The region spanning 118-290 (SADEVMQWVE…IGQVIYREIE (173 aa)) is the 3'-5' exonuclease domain. Positions 140, 142, and 278 each coordinate Mg(2+).

Belongs to the WRNexo family.

The protein localises to the nucleus. Functionally, has exonuclease activity on both single-stranded and duplex templates bearing overhangs, but not blunt ended duplex DNA, and cleaves in a 3'-5' direction. Essential for the formation of DNA replication focal centers. Has an important role in maintaining genome stability. The chain is 3'-5' exonuclease from Drosophila grimshawi (Hawaiian fruit fly).